We begin with the raw amino-acid sequence, 443 residues long: Xaa-Pro dipeptidase (443 aa).

D246, D257, H339, E384, and E423 together coordinate Mn(2+).

The protein belongs to the peptidase M24B family. Bacterial-type prolidase subfamily. It depends on Mn(2+) as a cofactor.

It catalyses the reaction Xaa-L-Pro dipeptide + H2O = an L-alpha-amino acid + L-proline. Its function is as follows. Splits dipeptides with a prolyl residue in the C-terminal position. The chain is Xaa-Pro dipeptidase from Shigella dysenteriae serotype 1 (strain Sd197).